A 281-amino-acid chain; its full sequence is NADPH-dependent 7-cyano-7-deazaguanine reductase (281 aa).

Residue 88–90 participates in substrate binding; sequence VES. Residue 90–91 participates in NADPH binding; that stretch reads SK. Residue C189 is the Thioimide intermediate of the active site. D196 functions as the Proton donor in the catalytic mechanism. 228–229 serves as a coordination point for substrate; the sequence is HE. 257 to 258 provides a ligand contact to NADPH; sequence RG.

Belongs to the GTP cyclohydrolase I family. QueF type 2 subfamily. In terms of assembly, homodimer.

The protein resides in the cytoplasm. It catalyses the reaction 7-aminomethyl-7-carbaguanine + 2 NADP(+) = 7-cyano-7-deazaguanine + 2 NADPH + 3 H(+). It participates in tRNA modification; tRNA-queuosine biosynthesis. Catalyzes the NADPH-dependent reduction of 7-cyano-7-deazaguanine (preQ0) to 7-aminomethyl-7-deazaguanine (preQ1). This Cronobacter sakazakii (strain ATCC BAA-894) (Enterobacter sakazakii) protein is NADPH-dependent 7-cyano-7-deazaguanine reductase.